The chain runs to 98 residues: MAVKERIGTVVSDKMEKTVVVAVESRFPHPIYQKTVSRTTRYKAHDEDNTCRVGDRVRITETRPMSRQKRWAIAEVLSHSPKAAAEEANKAEAQEVKQ.

The protein belongs to the universal ribosomal protein uS17 family. In terms of assembly, part of the 30S ribosomal subunit.

Functionally, one of the primary rRNA binding proteins, it binds specifically to the 5'-end of 16S ribosomal RNA. This chain is Small ribosomal subunit protein uS17, found in Synechococcus sp. (strain CC9605).